Here is a 97-residue protein sequence, read N- to C-terminus: Apolipoprotein C-II (97 aa).

Positions 1–22 are cleaved as a signal peptide; sequence MGSRFFLALFLALLVLGNEVQG. The interval 63-71 is lipid binding; the sequence is SVDEKLRDM. The lipoprotein lipase cofactor stretch occupies residues 75-97; it reads SSAAMTTYAGIFTDQLLTLLKGE.

This sequence belongs to the apolipoprotein C2 family. In terms of processing, proapolipoprotein C-II is synthesized as a sialic acid containing glycoprotein which is subsequently desialylated prior to its proteolytic processing. Proapolipoprotein C-II, the major form found in plasma undergoes proteolytic cleavage of its N-terminal hexapeptide to generate the mature form apolipoprotein C-II, which occurs as the minor form in plasma.

The protein localises to the secreted. Its function is as follows. Component of chylomicrons, very low-density lipoproteins (VLDL), low-density lipoproteins (LDL), and high-density lipoproteins (HDL) in plasma. Plays an important role in lipoprotein metabolism as an activator of lipoprotein lipase. The sequence is that of Apolipoprotein C-II (Apoc2) from Rattus norvegicus (Rat).